A 477-amino-acid chain; its full sequence is Mitochondrial adenyl nucleotide antiporter SLC25A24 (477 aa).

The regulatory N-terminal domain stretch occupies residues 1-173; sequence MLRWLRDFVL…RFWKHSTGID (173 aa). Residues 1–197 lie on the Mitochondrial intermembrane side of the membrane; the sequence is MLRWLRDFVL…EKKSGQWWRQ (197 aa). 4 EF-hand domains span residues 19–54, 55–88, 86–121, and 122–157; these read EQPTRYETLFQALDRNGDGVVDIGELQEGLRNLGIP, LGQDAEEKIFTTGDVNKDGKLDFEEFMKYLKDHE, DHEKKMKLAFKSLDKNNDGKIEASEIVQSLQTLGLT, and ISEQQAELILQSIDVDGTMTVDWNEWRDYFLFNPVT. Aspartate 32, asparagine 34, aspartate 36, valine 38, glutamate 43, aspartate 68, asparagine 70, aspartate 72, lysine 74, glutamate 79, aspartate 99, asparagine 101, aspartate 103, lysine 105, glutamate 110, aspartate 135, aspartate 137, threonine 139, threonine 141, and glutamate 146 together coordinate Ca(2+). The interval 159–168 is linker region; sequence IEEIIRFWKH. A C-terminal transmembrane transporter domain region spans residues 174-477; sequence IGDSLTIPDE…MKQTLGVTQK (304 aa). Solcar repeat units follow at residues 192–278, 286–371, and 383–471; these read GQWW…YKKL, IGTF…LKSY, and PGVM…MKQT. A helical transmembrane segment spans residues 198–215; sequence LLAGGIAGAVSRTSTAPL. The Mitochondrial matrix segment spans residues 216–252; sequence DRLKIMMQVHGSKSDKMNIFGGFRQMVKEGGIRSLWR. A helical transmembrane segment spans residues 253-272; sequence GNGTNVIKIAPETAVKFWAY. Residues 273-295 are Mitochondrial intermembrane-facing; that stretch reads EQYKKLLTEEGQKIGTFERFISG. A helical transmembrane segment spans residues 296–309; that stretch reads SMAGATAQTFIYPM. At 310-345 the chain is on the mitochondrial matrix side; that stretch reads EVMKTRLAVGKTGQYSGIYDCAKKILKHEGLGAFYK. Lysine 320 bears the N6-acetyllysine; alternate mark. At lysine 320 the chain carries N6-succinyllysine; alternate. At lysine 336 the chain carries N6-acetyllysine. The helical transmembrane segment at 346–365 threads the bilayer; it reads GYVPNLLGIIPYAGIDLAVY. Residues 366-388 lie on the Mitochondrial intermembrane side of the membrane; it reads ELLKSYWLDNFAKDSVNPGVMVL. A helical membrane pass occupies residues 389–406; it reads LGCGALSSTCGQLASYPL. At 407 to 445 the chain is on the mitochondrial matrix side; sequence ALVRTRMQAQAMLEGSPQLNMVGLFRRIISKEGIPGLYR. At lysine 437 the chain carries N6-acetyllysine; alternate. Residue lysine 437 is modified to N6-succinyllysine; alternate. The chain crosses the membrane as a helical span at residues 446–465; the sequence is GITPNFMKVLPAVGISYVVY. Residues 466–477 lie on the Mitochondrial intermembrane side of the membrane; it reads ENMKQTLGVTQK.

The protein belongs to the mitochondrial carrier (TC 2.A.29) family. Monomer. As to expression, expressed in all tissues tested. Highly expressed in testis, expressed at intermediate level in small intestine and pancreas, and weakly expressed in kidney, spleen, liver, skeletal muscle and heart.

It localises to the mitochondrion inner membrane. It catalyses the reaction Mg(2+)(out) + phosphate(in) + ATP(out) = Mg(2+)(in) + phosphate(out) + ATP(in). It carries out the reaction ADP(out) + phosphate(in) + H(+)(out) = ADP(in) + phosphate(out) + H(+)(in). The catalysed reaction is AMP(out) + phosphate(in) = AMP(in) + phosphate(out). The enzyme catalyses phosphate(in) + ATP(out) + 2 H(+)(out) = phosphate(out) + ATP(in) + 2 H(+)(in). It catalyses the reaction dADP(in) + ADP(out) = dADP(out) + ADP(in). It carries out the reaction Mg(2+)(in) + ADP(out) + ATP(in) + H(+)(out) = Mg(2+)(out) + ADP(in) + ATP(out) + H(+)(in). The catalysed reaction is ADP(out) + diphosphate(in) = ADP(in) + diphosphate(out). The enzyme catalyses dAMP(in) + ADP(out) + H(+)(out) = dAMP(out) + ADP(in) + H(+)(in). It catalyses the reaction 3'-AMP(in) + ADP(out) + H(+)(out) = 3'-AMP(out) + ADP(in) + H(+)(in). It carries out the reaction dAMP(out) + phosphate(in) = dAMP(in) + phosphate(out). The catalysed reaction is 3'-AMP(out) + phosphate(in) = 3'-AMP(in) + phosphate(out). The enzyme catalyses dADP(out) + phosphate(in) + H(+)(out) = dADP(in) + phosphate(out) + H(+)(in). Its activity is regulated as follows. Activated by an increase in cytosolic calcium levels that induce a conformational change of the N-terminal regulatory domain, uncapping the channel and allowing transport. Inhibited by bathophenanthroline, mersalyl, p-hydroxymercuribenzoate, bromcresol purple and tannic acid. Its function is as follows. Electroneutral antiporter that mediates the transport of adenyl nucleotides through the inner mitochondrial membrane. Originally identified as an ATP-magnesium/inorganic phosphate antiporter, it also acts as a broad specificity adenyl nucleotide antiporter. By regulating the mitochondrial matrix adenyl nucleotide pool could adapt to changing cellular energetic demands and indirectly regulate adenyl nucleotide-dependent metabolic pathways. In vitro, a low activity is also observed with guanyl and pyrimidine nucleotides. May play a role in protecting cells against oxidative stress-induced cell death, by buffering calcium levels in the mitochondrial matrix through the formation of calcium-phosphate precipitates. The sequence is that of Mitochondrial adenyl nucleotide antiporter SLC25A24 from Homo sapiens (Human).